Consider the following 250-residue polypeptide: Complement factor B-like protease (250 aa).

Sushi domains lie at 3–73, 74–133, and 136–193; these read TRCD…KCRA, VWCP…VCDD, and GDCP…QCRA. Intrachain disulfides connect Cys-5/Cys-44, Cys-30/Cys-71, Cys-76/Cys-118, Cys-104/Cys-131, Cys-138/Cys-178, and Cys-164/Cys-191. A glycan (N-linked (GlcNAc...) asparagine) is linked at Asn-115. Asn-221 carries N-linked (GlcNAc...) asparagine glycosylation.

The protein belongs to the peptidase S1 family. As to expression, plasma.

It localises to the secreted. Functionally, required in both the classical and alternate pathways of the complement system. The polypeptide is Complement factor B-like protease (Gallus gallus (Chicken)).